A 417-amino-acid polypeptide reads, in one-letter code: Serine hydroxymethyltransferase (417 aa).

Residues Leu-112 and 116–118 (GHL) each bind (6S)-5,6,7,8-tetrahydrofolate. Residue Lys-221 is modified to N6-(pyridoxal phosphate)lysine. Residue Glu-247 coordinates (6S)-5,6,7,8-tetrahydrofolate.

Belongs to the SHMT family. Homodimer. Pyridoxal 5'-phosphate serves as cofactor.

The protein localises to the cytoplasm. It catalyses the reaction (6R)-5,10-methylene-5,6,7,8-tetrahydrofolate + glycine + H2O = (6S)-5,6,7,8-tetrahydrofolate + L-serine. It functions in the pathway one-carbon metabolism; tetrahydrofolate interconversion. The protein operates within amino-acid biosynthesis; glycine biosynthesis; glycine from L-serine: step 1/1. Its function is as follows. Catalyzes the reversible interconversion of serine and glycine with tetrahydrofolate (THF) serving as the one-carbon carrier. This reaction serves as the major source of one-carbon groups required for the biosynthesis of purines, thymidylate, methionine, and other important biomolecules. Also exhibits THF-independent aldolase activity toward beta-hydroxyamino acids, producing glycine and aldehydes, via a retro-aldol mechanism. This Borrelia turicatae (strain 91E135) protein is Serine hydroxymethyltransferase.